A 546-amino-acid polypeptide reads, in one-letter code: Cation/calcium exchanger 5 (546 aa).

13 consecutive transmembrane segments (helical) span residues 13–33 (ALCL…TTIP), 88–108 (NLFF…YILI), 134–154 (AVTL…VAAL), 163–183 (FGAI…FVAI), 194–214 (SFVR…YVYL), 218–238 (IFVW…GFVF), 323–343 (SANI…FVQL), 356–376 (LPLW…HFTV), 388–408 (VIVV…GELL), 423–445 (ALLG…DVAV), 455–475 (MAGC…SALV), 492–512 (VGIV…LLVI), and 522–542 (FWGI…LIIA).

Belongs to the Ca(2+):cation antiporter (CaCA) (TC 2.A.19) family. Cation/calcium exchanger (CCX) subfamily.

Its subcellular location is the cell membrane. Functionally, membrane-localized H(+)-dependent K(+) and Na(+) transporter. The polypeptide is Cation/calcium exchanger 5 (CCX5) (Arabidopsis thaliana (Mouse-ear cress)).